Reading from the N-terminus, the 224-residue chain is Response regulator protein GraR (224 aa).

Residues Gln-2–Tyr-115 form the Response regulatory domain. Asp-51 bears the 4-aspartylphosphate mark. The ompR/PhoB-type DNA-binding region spans Lys-126–Glu-224. 3 positions are modified to phosphothreonine: Thr-128, Thr-130, and Thr-149.

As to quaternary structure, interacts with GraX. Phosphorylated by GraS. Phosphorylated by Stk1; phosphorylation increases the DNA-binding activity of GraR.

Its subcellular location is the cytoplasm. Member of the two-component regulatory system GraR/GraS involved in resistance against cationic antimicrobial peptides (CAMPs). Upon phosphorylation by GraS, functions as a transcription regulator by direct binding to promoter regions of target genes such as adhesins, exoproteins, transporters, toxins, and proteins involved in cell wall synthesis. Down-regulates the expression of many genes involved in RNA and amino acid synthesis or glycolysis. This is Response regulator protein GraR (graR) from Staphylococcus aureus (strain MRSA252).